The sequence spans 327 residues: Secondary metabolism regulator LAE1 (327 aa).

The protein belongs to the methyltransferase superfamily. LaeA methyltransferase family.

The protein resides in the nucleus. It carries out the reaction L-methionyl-[protein] + S-adenosyl-L-methionine = S-methyl-L-methionyl-[protein] + S-adenosyl-L-homocysteine. In terms of biological role, secondary metabolism regulator that controls the expression of the tenuazonic acid biosynthesis cluster. Methyltransferase that performs automethylation. No other methyl-accepting substrate has been identified yet. This is Secondary metabolism regulator LAE1 from Pyricularia oryzae (strain 70-15 / ATCC MYA-4617 / FGSC 8958) (Rice blast fungus).